Consider the following 164-residue polypeptide: Cold-inducible RNA-binding protein (164 aa).

The RRM domain maps to 6 to 84; the sequence is GKLFVGGLSF…RQIRVDQAGK (79 aa). The tract at residues 65–164 is disordered; sequence AGMNGKTVDG…SYRDSYDSYG (100 aa). A compositionally biased stretch (gly residues) spans 93-118; the sequence is YRGGSSGGGRGFFRGGRGRGGGGYGG. Positions 155–164 are enriched in basic and acidic residues; the sequence is SYRDSYDSYG.

Interacts with prmt1. Interacts with elavl1/elrA (via RRM3). Associates with ribosomes. In terms of processing, methylated on arginine residues within RGG motifs. Methylation by prmt1 promotes cytoplasmic accumulation.

The protein resides in the nucleus. It localises to the nucleoplasm. The protein localises to the cytoplasm. Functionally, cold-inducible mRNA binding protein. Acts cooperatively with elavl1/elrA to stabilize AU-rich element (ARE)-containing mRNAs by binding to them and inhibiting their deadenylation. Essential for embryonic gastrulation and neural development, acting to maintain the expression of a set of adhesion molecules, and cell movement during embryogenesis. Required for pronephros development. May play a role in hibernation. The chain is Cold-inducible RNA-binding protein from Aquarana catesbeiana (American bullfrog).